Here is a 670-residue protein sequence, read N- to C-terminus: Serine/threonine-rich protein adg2 (670 aa).

A signal peptide spans 1-19 (MRRLTISGLLISLAKLCAG). N-linked (GlcNAc...) asparagine glycans are attached at residues Asn-77, Asn-159, Asn-204, Asn-224, Asn-274, Asn-297, Asn-327, Asn-351, Asn-370, Asn-381, Asn-405, Asn-424, Asn-435, Asn-459, Asn-478, Asn-489, and Asn-513. Residues 526–651 (GSVSSFSSSP…MSLPPSAGSS (126 aa)) are disordered.

Its subcellular location is the secreted. It is found in the endoplasmic reticulum. In Schizosaccharomyces pombe (strain 972 / ATCC 24843) (Fission yeast), this protein is Serine/threonine-rich protein adg2 (adg2).